We begin with the raw amino-acid sequence, 385 residues long: Zinc finger protein B385R (385 aa).

2 consecutive C2H2-type zinc fingers follow at residues 166–190 and 168–190; these read LQCP…FYNH and CPNC…FYNH.

This sequence belongs to the asfivirus B385R family.

This chain is Zinc finger protein B385R, found in African swine fever virus (isolate Tick/Malawi/Lil 20-1/1983) (ASFV).